Consider the following 507-residue polypeptide: Secreted lipase ARB_01498 (507 aa).

The signal sequence occupies residues 1–21; sequence MFVQLLTYGLVAASTLQGVFA. Serine 196 (acyl-ester intermediate) is an active-site residue. 4 N-linked (GlcNAc...) asparagine glycosylation sites follow: asparagine 262, asparagine 321, asparagine 358, and asparagine 416.

Belongs to the type-B carboxylesterase/lipase family.

Its subcellular location is the secreted. It carries out the reaction a triacylglycerol + H2O = a diacylglycerol + a fatty acid + H(+). The chain is Secreted lipase ARB_01498 from Arthroderma benhamiae (strain ATCC MYA-4681 / CBS 112371) (Trichophyton mentagrophytes).